Reading from the N-terminus, the 108-residue chain is Cuticle protein AM1199 (108 aa).

Residue glutamine 1 is modified to Pyrrolidone carboxylic acid. In terms of domain architecture, Chitin-binding type R&amp;R spans 26–91; sequence DGNFGYDFET…AESPLIPTPH (66 aa). O-linked (HexNAc) threonine glycosylation occurs at threonine 89.

Arthrodial membrane.

This is Cuticle protein AM1199 from Cancer pagurus (Rock crab).